Consider the following 173-residue polypeptide: NADH-ubiquinone oxidoreductase chain 6 (173 aa).

5 helical membrane-spanning segments follow: residues 1-21, 27-47, 48-68, 87-107, and 139-159; these read MTYF…AVAS, YGVV…LSLG, VSFV…VVFV, VVGY…VGGF, and CGVG…FVVL.

This sequence belongs to the complex I subunit 6 family.

Its subcellular location is the mitochondrion membrane. The catalysed reaction is a ubiquinone + NADH + 5 H(+)(in) = a ubiquinol + NAD(+) + 4 H(+)(out). In terms of biological role, core subunit of the mitochondrial membrane respiratory chain NADH dehydrogenase (Complex I) that is believed to belong to the minimal assembly required for catalysis. Complex I functions in the transfer of electrons from NADH to the respiratory chain. The immediate electron acceptor for the enzyme is believed to be ubiquinone. The protein is NADH-ubiquinone oxidoreductase chain 6 (MT-ND6) of Ptychoramphus aleuticus (Cassin's auklet).